Consider the following 182-residue polypeptide: Large ribosomal subunit protein uL6 (182 aa).

It belongs to the universal ribosomal protein uL6 family. In terms of assembly, part of the 50S ribosomal subunit.

Functionally, this protein binds to the 23S rRNA, and is important in its secondary structure. It is located near the subunit interface in the base of the L7/L12 stalk, and near the tRNA binding site of the peptidyltransferase center. This chain is Large ribosomal subunit protein uL6, found in Dehalococcoides mccartyi (strain CBDB1).